A 141-amino-acid polypeptide reads, in one-letter code: Large ribosomal subunit protein uL11 (141 aa).

This sequence belongs to the universal ribosomal protein uL11 family. Part of the ribosomal stalk of the 50S ribosomal subunit. Interacts with L10 and the large rRNA to form the base of the stalk. L10 forms an elongated spine to which L12 dimers bind in a sequential fashion forming a multimeric L10(L12)X complex. One or more lysine residues are methylated.

Its function is as follows. Forms part of the ribosomal stalk which helps the ribosome interact with GTP-bound translation factors. This Prochlorococcus marinus (strain MIT 9313) protein is Large ribosomal subunit protein uL11.